The following is a 970-amino-acid chain: Serine/threonine-protein kinase PLK4 (970 aa).

In terms of domain architecture, Protein kinase spans 12–265 (FKVGNLLGKG…LSSVLDHPFM (254 aa)). Residues 18–26 (LGKGSFAGV) and K41 each bind ATP. N6-acetyllysine occurs at positions 45 and 46. Residue D136 is the Proton acceptor of the active site. Disordered regions lie at residues 323–458 (TVFP…NHLC) and 497–538 (SISP…HSVK). Positions 328 to 356 (NKSSTDFSSSGDGNSFYTQWGNQETSNSG) are enriched in polar residues. The segment covering 360 to 369 (VIQDAEERPH) has biased composition (basic and acidic residues). Over residues 379–393 (SDRSGTSNSQSQAKT) the composition is skewed to polar residues. Phosphoserine is present on S401. Positions 438–454 (SSSSGSFERPDNNQALS) are enriched in polar residues. A compositionally biased stretch (basic and acidic residues) spans 504–515 (FQGHPDLQKDTS). The Cryptic POLO box 1 (CPB1) domain maps to 586–699 (TLRSITSPLV…SRFVQLVRSK (114 aa)). S665 bears the Phosphoserine mark. The Cryptic POLO box 2 (CPB2) domain occupies 700–813 (SPKITYFTRY…GRKPGSTSSP (114 aa)). Residues 808-828 (GSTSSPKALSPPPSVDSNYPT) are disordered. S817 is modified (phosphoserine). Positions 886 to 964 (QLLKSVFVKN…LSSILLMFSN (79 aa)) constitute a POLO box domain.

Belongs to the protein kinase superfamily. Ser/Thr protein kinase family. CDC5/Polo subfamily. In terms of assembly, homodimer. Interacts with CEP152 (via N-terminus). Interacts with CEP78; this interaction may be important for proper PLK4 localization to the centriole and PLK4-induced overduplication of centrioles. Interacts with CEP131. Interacts simultaneously with TENT5C and CEP192. Interacts with TENT5C; this interaction leads to the TENT5C recruitment in the centrosome. Interacts with CEP85; this interaction may be important in cell migration and centriole assembly. In terms of processing, acetylation by KAT2A and KAT2B impairs kinase activity by shifting the kinase to an inactive conformation. Post-translationally, ubiquitinated; leading to its degradation by the proteasome. Deubiquitinated by USP54; leading to PLK4 stabilization. Tyrosine-phosphorylated by TEC.

The protein localises to the cytoplasm. Its subcellular location is the cytoskeleton. It is found in the microtubule organizing center. The protein resides in the centrosome. It localises to the centriole. The protein localises to the nucleus. Its subcellular location is the nucleolus. It is found in the cleavage furrow. It carries out the reaction L-seryl-[protein] + ATP = O-phospho-L-seryl-[protein] + ADP + H(+). The enzyme catalyses L-threonyl-[protein] + ATP = O-phospho-L-threonyl-[protein] + ADP + H(+). In terms of biological role, serine/threonine-protein kinase that plays a central role in centriole duplication. Able to trigger procentriole formation on the surface of the parental centriole cylinder, leading to the recruitment of centriole biogenesis proteins such as SASS6, CPAP, CCP110, CEP135 and gamma-tubulin. When overexpressed, it is able to induce centrosome amplification through the simultaneous generation of multiple procentrioles adjoining each parental centriole during S phase. Phosphorylates 'Ser-151' of FBXW5 during the G1/S transition, leading to inhibit FBXW5 ability to ubiquitinate SASS6. Its central role in centriole replication suggests a possible role in tumorigenesis, centrosome aberrations being frequently observed in tumors. Also involved in deuterosome-mediated centriole amplification in multiciliated that can generate more than 100 centrioles. Also involved in trophoblast differentiation by phosphorylating HAND1, leading to disrupt the interaction between HAND1 and MDFIC and activate HAND1. Phosphorylates CDC25C and CHEK2. Required for the recruitment of STIL to the centriole and for STIL-mediated centriole amplification. Phosphorylates CEP131 at 'Ser-78' and PCM1 at 'Ser-372' which is essential for proper organization and integrity of centriolar satellites. This Homo sapiens (Human) protein is Serine/threonine-protein kinase PLK4.